The sequence spans 126 residues: Holo-[acyl-carrier-protein] synthase (126 aa).

Mg(2+) contacts are provided by Asp-9 and Glu-58.

This sequence belongs to the P-Pant transferase superfamily. AcpS family. Mg(2+) serves as cofactor.

Its subcellular location is the cytoplasm. It catalyses the reaction apo-[ACP] + CoA = holo-[ACP] + adenosine 3',5'-bisphosphate + H(+). Its function is as follows. Transfers the 4'-phosphopantetheine moiety from coenzyme A to a Ser of acyl-carrier-protein. This chain is Holo-[acyl-carrier-protein] synthase, found in Edwardsiella ictaluri (strain 93-146).